Reading from the N-terminus, the 292-residue chain is NAD kinase (292 aa).

Residue Asp73 is the Proton acceptor of the active site. NAD(+)-binding positions include 73–74 (DG), 147–148 (NE), His158, Arg175, Asp177, 188–193 (TAYSLS), and Gln247.

This sequence belongs to the NAD kinase family. A divalent metal cation is required as a cofactor.

The protein localises to the cytoplasm. The catalysed reaction is NAD(+) + ATP = ADP + NADP(+) + H(+). Involved in the regulation of the intracellular balance of NAD and NADP, and is a key enzyme in the biosynthesis of NADP. Catalyzes specifically the phosphorylation on 2'-hydroxyl of the adenosine moiety of NAD to yield NADP. This Erwinia tasmaniensis (strain DSM 17950 / CFBP 7177 / CIP 109463 / NCPPB 4357 / Et1/99) protein is NAD kinase.